A 309-amino-acid chain; its full sequence is Putative proline iminopeptidase (309 aa).

The AB hydrolase-1 domain maps to 33-291 (LYVHGGPGSG…LYVTNNAGHS (259 aa)). Ser-105 acts as the Nucleophile in catalysis. The active site involves Asp-262. His-290 acts as the Proton donor in catalysis.

The protein belongs to the peptidase S33 family.

The protein resides in the cytoplasm. It carries out the reaction Release of N-terminal proline from a peptide.. In terms of biological role, specifically catalyzes the removal of N-terminal proline residues from peptides. In Mycoplasma pneumoniae (strain ATCC 29342 / M129 / Subtype 1) (Mycoplasmoides pneumoniae), this protein is Putative proline iminopeptidase (pip).